Reading from the N-terminus, the 219-residue chain is MVQLTEETYLYDPNLLLKLDFHRSPANFKPFISAANPGEPWMKVRPLKDTDYDRGFLQLLSQLTHVGNVNRTQFLTRFSQMKASGDYFVTVIEDTRKNEIIGAASLVIERKFIHNCAVRGRLEDVVVNDTYRGKQLGKLIVVTVSLLAEELGCYKMSLDCKDKLIKFYESLGYVAIPGNSNSMTIRYDEGPTLKRNATSAGSSGTVGDSCQTVSLDFAS.

An N-acetyltransferase domain is found at 42–198 (MKVRPLKDTD…EGPTLKRNAT (157 aa)). Residues T64, 111 to 114 (KFIH), and 123 to 125 (EDV) contribute to the substrate site. Residue 133-138 (GKQLGK) coordinates acetyl-CoA. Substrate-binding positions include 154–155 (YK) and R186.

Belongs to the acetyltransferase family. GNA1 subfamily.

The enzyme catalyses D-glucosamine 6-phosphate + acetyl-CoA = N-acetyl-D-glucosamine 6-phosphate + CoA + H(+). The protein operates within nucleotide-sugar biosynthesis; UDP-N-acetyl-alpha-D-glucosamine biosynthesis; N-acetyl-alpha-D-glucosamine 1-phosphate from alpha-D-glucosamine 6-phosphate (route I): step 1/2. This Drosophila melanogaster (Fruit fly) protein is Probable glucosamine 6-phosphate N-acetyltransferase.